Here is a 441-residue protein sequence, read N- to C-terminus: Enolase (441 aa).

Gln-164 provides a ligand contact to (2R)-2-phosphoglycerate. Glu-206 (proton donor) is an active-site residue. Residues Asp-243, Glu-289, and Asp-316 each contribute to the Mg(2+) site. The (2R)-2-phosphoglycerate site is built by Lys-341, Arg-370, Ser-371, and Lys-392. Residue Lys-341 is the Proton acceptor of the active site.

It belongs to the enolase family. The cofactor is Mg(2+).

It localises to the cytoplasm. The protein resides in the secreted. Its subcellular location is the cell surface. It carries out the reaction (2R)-2-phosphoglycerate = phosphoenolpyruvate + H2O. It participates in carbohydrate degradation; glycolysis; pyruvate from D-glyceraldehyde 3-phosphate: step 4/5. Its function is as follows. Catalyzes the reversible conversion of 2-phosphoglycerate (2-PG) into phosphoenolpyruvate (PEP). It is essential for the degradation of carbohydrates via glycolysis. This chain is Enolase, found in Leuconostoc citreum (strain KM20).